The primary structure comprises 317 residues: Ribose-phosphate pyrophosphokinase (317 aa).

ATP is bound by residues 43-45 (DGE) and 102-103 (RQ). Mg(2+) is bound by residues His-136 and Asp-175. The active site involves Lys-198. D-ribose 5-phosphate is bound by residues Arg-200, Asp-224, and 228–232 (DTAGT).

This sequence belongs to the ribose-phosphate pyrophosphokinase family. Class I subfamily. Homohexamer. It depends on Mg(2+) as a cofactor.

The protein localises to the cytoplasm. It carries out the reaction D-ribose 5-phosphate + ATP = 5-phospho-alpha-D-ribose 1-diphosphate + AMP + H(+). It participates in metabolic intermediate biosynthesis; 5-phospho-alpha-D-ribose 1-diphosphate biosynthesis; 5-phospho-alpha-D-ribose 1-diphosphate from D-ribose 5-phosphate (route I): step 1/1. Involved in the biosynthesis of the central metabolite phospho-alpha-D-ribosyl-1-pyrophosphate (PRPP) via the transfer of pyrophosphoryl group from ATP to 1-hydroxyl of ribose-5-phosphate (Rib-5-P). The polypeptide is Ribose-phosphate pyrophosphokinase (Bacillus anthracis).